Here is a 570-residue protein sequence, read N- to C-terminus: Sulfite reductase [NADPH] hemoprotein beta-component (570 aa).

Positions 434, 440, 479, and 483 each coordinate [4Fe-4S] cluster. Cys483 provides a ligand contact to siroheme.

The protein belongs to the nitrite and sulfite reductase 4Fe-4S domain family. In terms of assembly, alpha(8)-beta(8). The alpha component is a flavoprotein, the beta component is a hemoprotein. The cofactor is siroheme. Requires [4Fe-4S] cluster as cofactor.

It catalyses the reaction hydrogen sulfide + 3 NADP(+) + 3 H2O = sulfite + 3 NADPH + 4 H(+). It participates in sulfur metabolism; hydrogen sulfide biosynthesis; hydrogen sulfide from sulfite (NADPH route): step 1/1. Functionally, component of the sulfite reductase complex that catalyzes the 6-electron reduction of sulfite to sulfide. This is one of several activities required for the biosynthesis of L-cysteine from sulfate. The sequence is that of Sulfite reductase [NADPH] hemoprotein beta-component from Salmonella newport (strain SL254).